We begin with the raw amino-acid sequence, 309 residues long: tRNA hydroxylation protein P2 (309 aa).

It belongs to the peptidase U32 family.

Involved in prephenate-dependent formation of 5-hydroxyuridine (ho5U) modification at position 34 in tRNAs, the first step in 5-methoxyuridine (mo5U) biosynthesis. In Bacillus subtilis (strain 168), this protein is tRNA hydroxylation protein P2.